Reading from the N-terminus, the 368-residue chain is 4-hydroxy-3-methylbut-2-en-1-yl diphosphate synthase (flavodoxin) (368 aa).

[4Fe-4S] cluster is bound by residues cysteine 271, cysteine 274, cysteine 306, and glutamate 313.

Belongs to the IspG family. Requires [4Fe-4S] cluster as cofactor.

It catalyses the reaction (2E)-4-hydroxy-3-methylbut-2-enyl diphosphate + oxidized [flavodoxin] + H2O + 2 H(+) = 2-C-methyl-D-erythritol 2,4-cyclic diphosphate + reduced [flavodoxin]. It participates in isoprenoid biosynthesis; isopentenyl diphosphate biosynthesis via DXP pathway; isopentenyl diphosphate from 1-deoxy-D-xylulose 5-phosphate: step 5/6. In terms of biological role, converts 2C-methyl-D-erythritol 2,4-cyclodiphosphate (ME-2,4cPP) into 1-hydroxy-2-methyl-2-(E)-butenyl 4-diphosphate. The protein is 4-hydroxy-3-methylbut-2-en-1-yl diphosphate synthase (flavodoxin) of Mannheimia succiniciproducens (strain KCTC 0769BP / MBEL55E).